Here is a 282-residue protein sequence, read N- to C-terminus: U1 small nuclear ribonucleoprotein A (282 aa).

N-acetylalanine is present on Ala2. The RRM 1 domain maps to 10 to 89 (HTIYINNLNE…KPMRIQYAKT (80 aa)). Lys60 bears the N6-acetyllysine mark. Residues 100 to 132 (TFVERDRKREKRKPKSQETPATKKAVQGGGATP) are disordered. Position 131 is a phosphothreonine (Thr131). Omega-N-methylarginine is present on Arg152. Residues 208–282 (HILFLTNLPE…NAMKISFAKK (75 aa)) form the RRM 2 domain.

Belongs to the RRM U1 A/B'' family. U1 snRNP is composed of the 7 core Sm proteins SNRPB, SNRPD1, SNRPD2, SNRPD3, SNRPE, SNRPF and SNRPG that assemble in a heptameric protein ring on the Sm site of the small nuclear RNA to form the core snRNP, and at least three U1 snRNP-specific proteins SNRNP70/U1-70K, SNRPA/U1-A and SNRPC/U1-C. Interacts with SFPQ; component of a snRNP-free complex with SFPQ. Interacts with IVNS1ABP (via BACK domain); the interaction is indirect.

Its subcellular location is the nucleus. Its function is as follows. Component of the spliceosomal U1 snRNP, which is essential for recognition of the pre-mRNA 5' splice-site and the subsequent assembly of the spliceosome. U1 snRNP is the first snRNP to interact with pre-mRNA. This interaction is required for the subsequent binding of U2 snRNP and the U4/U6/U5 tri-snRNP. SNRPA binds stem loop II of U1 snRNA. In a snRNP-free form (SF-A) may be involved in coupled pre-mRNA splicing and polyadenylation process. May bind preferentially to the 5'-UGCAC-3' motif on RNAs. This is U1 small nuclear ribonucleoprotein A (SNRPA) from Homo sapiens (Human).